Reading from the N-terminus, the 164-residue chain is FMN reductase (NADH) RutF (164 aa).

The protein belongs to the non-flavoprotein flavin reductase family. RutF subfamily.

The catalysed reaction is FMNH2 + NAD(+) = FMN + NADH + 2 H(+). Catalyzes the reduction of FMN to FMNH2 which is used to reduce pyrimidine by RutA via the Rut pathway. The polypeptide is FMN reductase (NADH) RutF (Klebsiella pneumoniae subsp. pneumoniae (strain ATCC 700721 / MGH 78578)).